We begin with the raw amino-acid sequence, 1580 residues long: Collagen alpha-1(XVI) chain (1580 aa).

The first 21 residues, 1 to 21, serve as a signal peptide directing secretion; that stretch reads MLTSWAPGLWVLGLWATFSHG. Residue asparagine 47 is glycosylated (N-linked (GlcNAc...) asparagine). The Laminin G-like domain occupies 50 to 231; the sequence is GFNLIRRLNL…LQQAHIYCDP (182 aa). Residues 232–374 are nonhelical region 10 (NC10); that stretch reads ELVLEEGCCE…SPDAPLQCVE (143 aa). Positions 324–547 are disordered; the sequence is RESNVTLGPS…DPAPAWEGLG (224 aa). N-linked (GlcNAc...) asparagine glycosylation occurs at asparagine 327. A Collagen-like 1 domain is found at 375–424; sequence GPKGEKGESGDLGPPGLPGPTGQKGQKGEKGDGGLKGLPGKPGRDGRPGE. The interval 375–509 is triple-helical region 9 (COL9) with 3 imperfections; that stretch reads GPKGEKGESG…PGTKGEKGDP (135 aa). Residues 449–460 are compositionally biased toward pro residues; it reads PGPPGLPGPPGI. Over residues 486 to 495 the composition is skewed to gly residues; that stretch reads GKEGPGGKPG. Positions 510-524 are nonhelical region 9 (NC9); it reads CEVCPTLPEGSQNFV. Residues 525-570 are triple-helical region 8 (COL8) with 1 imperfection; it reads GLPGKPGPKGEPGDPAPAWEGLGTVGLKGDRGDPGIQGMKGEKGEP. A Cell attachment site motif is present at residues 555 to 557; sequence RGD. A nonhelical region 8 (NC8) region spans residues 571–586; the sequence is CSSCSSGVGAQHLGPS. The span at 585 to 598 shows a compositional bias: low complexity; that stretch reads PSPGHGLPGLPGTS. Residues 585-935 are disordered; it reads PSPGHGLPGL…LPGQPGLTAE (351 aa). Residues 587–640 are triple-helical region 7 (COL7) with 1 imperfection; that stretch reads PGHGLPGLPGTSGIPGPRGLKGEKGSFGDTGPAGVPGSPGPVGPAGIKGAKGEP. Collagen-like domains lie at 590-643 and 676-725; these read GLPG…PCEP and GLPG…PAGP. Residues 641–661 form a nonhelical region 7 (NC7) region; sequence CEPCTALSELQDGDMRVVHLP. Residues 662–732 form a triple-helical region 6 (COL6) with 1 imperfection region; it reads GPAGEKGEPG…AGPKGEKGDG (71 aa). Residues 683 to 693 show a composition bias toward basic and acidic residues; sequence KAGERGLKGQK. Residues 698–714 show a composition bias toward low complexity; the sequence is NPGDPGTPGITGQPGIS. Residues 733 to 747 form a nonhelical region 6 (NC6) region; sequence CTACPSLQGALTDVS. Residues 748–870 are triple-helical region 5 (COL5) with 3 imperfections; the sequence is GLPGKPGPKG…RGEKGEPGEC (123 aa). The region spanning 797–848 is the Collagen-like 4 domain; it reads GAEGPQGEPGTQGLPGTQGLPGPRGPPGSAGEKGAQGSPGPKGAIGPMGPPG. The segment covering 801-817 has biased composition (low complexity); sequence PQGEPGTQGLPGTQGLP. Positions 871–881 are nonhelical region 5 (NC5); the sequence is SCPSRGEPIFS. Positions 882–933 are triple-helical region 4 (COL4) with 2 imperfections; it reads GMPGAPGLWMGSSSQPGPQGPPGVPGPPGPPGMPGLQGVPGHNGLPGQPGLT. Residues 899–914 show a composition bias toward pro residues; that stretch reads PQGPPGVPGPPGPPGM. A nonhelical region 4 (NC4) region spans residues 934–967; the sequence is AELGSLPIEKHLLKSICGDCAQGQTAHPAFLLEK. Residues 968–982 are triple-helical region 3 (COL3); that stretch reads GEKGDQGIPGVPGFD. The interval 983-1005 is nonhelical region 3 (NC3); the sequence is NCARCFIERERPRAEEARGDNSE. Disordered stretches follow at residues 995–1405 and 1445–1523; these read RAEE…LPGS and AAAP…GYGK. Positions 1000–1002 match the Cell attachment site motif; the sequence is RGD. One can recognise a Collagen-like 5 domain in the interval 1006 to 1063; it reads GEPGCSGSPGLPGPPGMPGQRGEEGPPGMRGSPGPPGPIGLQGERGLTGLTGDKGEPG. Residues 1006–1409 are triple-helical region 2 (COL2) with 2 imperfections; sequence GEPGCSGSPG…PGLPGSMGDM (404 aa). Residues 1098-1107 are compositionally biased toward low complexity; it reads SGPPGSEGLP. Pro residues-rich tracts occupy residues 1139–1148 and 1178–1187; these read FPGPPGPPGF and SPGPPGPPGI. Residues 1196–1205 are compositionally biased toward basic and acidic residues; it reads LDGKDGKPGL. The Cell attachment site signature appears at 1206 to 1208; sequence RGD. Positions 1210–1263 constitute a Collagen-like 6 domain; the sequence is GPAGPPGLMGPPGFKGKTGHPGLPGPKGDCGKPGPPGSSGRPGAEGEPGAMGPQ. A compositionally biased stretch (low complexity) spans 1247–1263; sequence SSGRPGAEGEPGAMGPQ. Residues 1265–1281 are compositionally biased toward pro residues; that stretch reads RPGPPGHLGPPGQPGPP. Collagen-like domains lie at 1350–1407, 1448–1500, and 1504–1552; these read GQKG…GSMG, PGRP…GDIG, and AGEN…GKAG. Positions 1362-1371 are enriched in gly residues; the sequence is GMPGGPGKSG. The segment covering 1396-1405 has biased composition (low complexity); sequence NPGLPGLPGS. A nonhelical region 2 (NC2) region spans residues 1410–1448; the sequence is VNYDDIKRFIRQEIIKLFDERMAYYTSRMQFPMEVAAAP. Residues 1449-1554 form a triple-helical region 1 (COL1) with 2 imperfections region; that stretch reads GRPGPPGKDG…MGQPGKAGHC (106 aa). A nonhelical region 1 (NC1) region spans residues 1555–1580; the sequence is NPSDCFGAMPMEQQYPPMKSMKGPFG.

Belongs to the fibril-associated collagens with interrupted helices (FACIT) family. In terms of assembly, homotrimer. Interacts with FBN1, fibronectin and integrins ITGA1/ITGB1 and ITGA2/ITGB1. Integrin ITGA1/ITGB1 binds to a unique site within COL16A1 located close to its C-terminal end between collagenous domains COL1-COL3. Prolines at the third position of the tripeptide repeating unit (G-X-Y) are hydroxylated in some or all of the chains. Post-translationally, glycosylated. Expressed in most tissues examined with highest levels of expression observed in heart. Strongly expressed in cortical and medullar regions of kidney and more weakly expressed in lung. Also detected in the ciliary muscle of the eye, on the serosa layer lining the muscularis externa of intestinal tissue, and in the perimysium membrane lining both the cardiac muscle bundle and the smooth muscle tissue of the small intestine. Strongly stained in particulate or granular structures. Not detected in brain or skeletal muscle.

Its subcellular location is the secreted. The protein resides in the extracellular space. It is found in the extracellular matrix. In terms of biological role, involved in mediating cell attachment and inducing integrin-mediated cellular reactions, such as cell spreading and alterations in cell morphology. This chain is Collagen alpha-1(XVI) chain, found in Mus musculus (Mouse).